The chain runs to 308 residues: Dihydroorotate dehydrogenase A (fumarate) (308 aa).

FMN is bound by residues serine 24 and 48-49 (KS). Substrate-binding positions include lysine 48, 72-76 (NANGL), and asparagine 132. Asparagine 132 serves as a coordination point for FMN. Cysteine 135 serves as the catalytic Nucleophile. FMN contacts are provided by lysine 171 and isoleucine 197. 198-199 (NT) lines the substrate pocket. Residues glycine 223 and 249 to 250 (GG) contribute to the FMN site.

Belongs to the dihydroorotate dehydrogenase family. Type 1 subfamily. Homodimer. FMN serves as cofactor.

The protein localises to the cytoplasm. It catalyses the reaction (S)-dihydroorotate + fumarate = orotate + succinate. It participates in pyrimidine metabolism; UMP biosynthesis via de novo pathway. Functionally, catalyzes the conversion of dihydroorotate to orotate with fumarate as the electron acceptor. The chain is Dihydroorotate dehydrogenase A (fumarate) (pyrD) from Limosilactobacillus reuteri (strain DSM 20016) (Lactobacillus reuteri).